Consider the following 511-residue polypeptide: Maturase K (511 aa).

It belongs to the intron maturase 2 family. MatK subfamily.

The protein localises to the plastid. Its subcellular location is the chloroplast. Usually encoded in the trnK tRNA gene intron. Probably assists in splicing its own and other chloroplast group II introns. The protein is Maturase K of Adesmia lanata.